Reading from the N-terminus, the 224-residue chain is Non-structural protein V (224 aa).

Residues 55–65 (KNIQYPTTSHQ) are compositionally biased toward polar residues. Disordered stretches follow at residues 55–90 (KNIQ…GTGG) and 145–172 (TSTP…GHRR). Residues His170, Cys189, Cys193, Cys205, Cys207, Cys210, Cys214, and Cys217 each coordinate Zn(2+).

This sequence belongs to the paramyxoviruses V protein family. As to quaternary structure, interacts with host IFIH1/MDA5 and DHX58/LGP2. Forms with host DDB1, CUL4A, STAT1, STAT2 and STAT3 the mumps virus V-dependent complex (VDC).

It is found in the virion. Its subcellular location is the host cytoplasm. In terms of biological role, plays an essential role in the inhibition of host immune response. Prevents the establishment of cellular antiviral state by blocking interferon-alpha/beta (IFN-alpha/beta) production and signaling pathway. Interacts with host IFIH1/MDA5 and DHX58/LGP2 to inhibit the transduction pathway involved in the activation of IFN-beta promoter, thus protecting the virus against cell antiviral state. Blocks the type I and II interferon signaling pathways by interacting with host STAT1, STAT2 and STAT3, and mediating their ubiquitination and subsequent proteasomal degradation. The chain is Non-structural protein V from Mumps virus genotype B (strain Miyahara vaccine) (MuV).